Here is a 63-residue protein sequence, read N- to C-terminus: uncharacterized protein (63 aa).

An N-terminal signal peptide occupies residues 1-21; the sequence is MYLSLLLILLAWTLWLGNSLA.

This is an uncharacterized protein from Haemophilus influenzae (strain ATCC 51907 / DSM 11121 / KW20 / Rd).